The sequence spans 389 residues: MGASDPEVAPWAPGGAAGMAGAGAGAGARGGAPAGVEARARDPPPAHRAHPRHPRPAAQPSARRMDGGPGAPGSGDNAPTTEALFVALGAGVTALSHPLLYVKLLIQVGHEPMPPTLGTNVLGRKVLYLPSFFTYAKYIVQVDGKIGLFRGLSPRLMSNALSTVTRGSMKKVFPPDEMEQVSNKDDMKTSLKKVVKETSYEMMMQCVSRMLAHPLHVISMRCMVQFVGREAKYSGVLSSIGKIFKEEGLLGFFVGLIPHLLGDVVFLWGCNLLAHFINAYLVDDSVSDTPGGLGNDQNPGSQFSQALAIRSYTKFVMGIAVSMLTYPFLLVGDLMAVNNCGLRAGLPPYSPVFKSWIHCWKYLSVQGQLFRGSSLLFRRVSSGSCFALE.

Residues 1 to 78 are disordered; that stretch reads MGASDPEVAP…PGAPGSGDNA (78 aa). Topologically, residues 1 to 93 are mitochondrial intermembrane; it reads MGASDPEVAP…LFVALGAGVT (93 aa). The span at 15 to 33 shows a compositional bias: gly residues; sequence GAAGMAGAGAGAGARGGAP. Residue Arg-29 is modified to Omega-N-methylarginine. Solcar repeat units lie at residues 81–176 and 192–280; these read TEAL…FPPD and KKVV…INAY. A helical membrane pass occupies residues 94–104; the sequence is ALSHPLLYVKL. Over 105 to 155 the chain is Cytoplasmic; it reads LIQVGHEPMPPTLGTNVLGRKVLYLPSFFTYAKYIVQVDGKIGLFRGLSPR. Residues 156–176 traverse the membrane as a helical segment; that stretch reads LMSNALSTVTRGSMKKVFPPD. Residues 177-209 lie on the Mitochondrial intermembrane side of the membrane; sequence EMEQVSNKDDMKTSLKKVVKETSYEMMMQCVSR. The helical transmembrane segment at 210–229 threads the bilayer; the sequence is MLAHPLHVISMRCMVQFVGR. At 230 to 254 the chain is on the cytoplasmic side; that stretch reads EAKYSGVLSSIGKIFKEEGLLGFFV. The chain crosses the membrane as a helical span at residues 255-279; that stretch reads GLIPHLLGDVVFLWGCNLLAHFINA. Residues 280–322 lie on the Mitochondrial intermembrane side of the membrane; the sequence is YLVDDSVSDTPGGLGNDQNPGSQFSQALAIRSYTKFVMGIAVS. The helical transmembrane segment at 323-342 threads the bilayer; the sequence is MLTYPFLLVGDLMAVNNCGL. Residues 343–371 lie on the Cytoplasmic side of the membrane; the sequence is RAGLPPYSPVFKSWIHCWKYLSVQGQLFR. Residues 372 to 389 form a helical membrane-spanning segment; the sequence is GSSLLFRRVSSGSCFALE.

This sequence belongs to the mitochondrial carrier (TC 2.A.29) family. In terms of assembly, interacts with PSEN1.

The protein localises to the mitochondrion outer membrane. Protein insertase that mediates insertion of transmembrane proteins into the mitochondrial outer membrane. Catalyzes insertion of proteins with alpha-helical transmembrane regions, such as signal-anchored, tail-anchored and multi-pass membrane proteins. Does not mediate insertion of beta-barrel transmembrane proteins. May play a role in apoptosis. This is Mitochondrial carrier homolog 1 (Mtch1) from Mus musculus (Mouse).